Reading from the N-terminus, the 263-residue chain is Acyl-[acyl-carrier-protein]--UDP-N-acetylglucosamine O-acyltransferase (263 aa).

This sequence belongs to the transferase hexapeptide repeat family. LpxA subfamily. Homotrimer.

Its subcellular location is the cytoplasm. It catalyses the reaction a (3R)-hydroxyacyl-[ACP] + UDP-N-acetyl-alpha-D-glucosamine = a UDP-3-O-[(3R)-3-hydroxyacyl]-N-acetyl-alpha-D-glucosamine + holo-[ACP]. It functions in the pathway glycolipid biosynthesis; lipid IV(A) biosynthesis; lipid IV(A) from (3R)-3-hydroxytetradecanoyl-[acyl-carrier-protein] and UDP-N-acetyl-alpha-D-glucosamine: step 1/6. Involved in the biosynthesis of lipid A, a phosphorylated glycolipid that anchors the lipopolysaccharide to the outer membrane of the cell. The polypeptide is Acyl-[acyl-carrier-protein]--UDP-N-acetylglucosamine O-acyltransferase (Campylobacter jejuni (strain RM1221)).